The primary structure comprises 686 residues: Tripartite terminase subunit 3 (686 aa).

The Walker A motif motif lies at isoleucine 220–threonine 227. The short motif at leucine 315 to glutamate 320 is the Walker B motif element. Glutamate 320 acts as the For ATPase activity in catalysis. Active-site for nuclease activity residues include aspartate 474, glutamate 546, and aspartate 658.

Belongs to the herpesviridae TRM3 protein family. Interacts with the terminase subunits TRM1 and TRM2. Interacts with portal protein.

Its subcellular location is the host nucleus. Its function is as follows. Component of the molecular motor that translocates viral genomic DNA in empty capsid during DNA packaging. Forms a tripartite terminase complex together with TRM1 and TRM2 in the host cytoplasm. Once the complex reaches the host nucleus, it interacts with the capsid portal vertex. This portal forms a ring in which genomic DNA is translocated into the capsid. TRM3 carries an RNase H-like nuclease activity that plays an important role for the cleavage of concatemeric viral DNA into unit length genomes. The sequence is that of Tripartite terminase subunit 3 from Alcelaphine herpesvirus 1 (strain C500) (AlHV-1).